The chain runs to 800 residues: uncharacterized protein (800 aa).

Residues 1-21 form the signal peptide; it reads MNRFFISTLLLLAQHLAPAAA. Over residues 63–72 the composition is skewed to polar residues; the sequence is SLSTGSPVEI. Disordered stretches follow at residues 63 to 470, 602 to 670, and 710 to 776; these read SLST…PLTT, TPIT…SSTS, and SSLS…TPSS. Composition is skewed to low complexity over residues 73–314, 321–368, 375–444, and 451–470; these read TSTS…SSTS, STSS…SSTS, STSS…TSTP, and TTSTSVPYTSTPVTSTPLTT. Low complexity predominate over residues 710 to 720; that stretch reads SSLSSIPNNST. The span at 721–734 shows a compositional bias: polar residues; sequence EVKTASTSSGTEIK. Positions 735 to 776 are enriched in low complexity; sequence TASTSSGSSSSSSYTPASSTSTTTSSVSSRQSSSSSSFTPSS.

It is found in the secreted. The protein resides in the cell surface. This is an uncharacterized protein from Schizosaccharomyces pombe (strain 972 / ATCC 24843) (Fission yeast).